The following is a 231-amino-acid chain: Small ribosomal subunit protein uS3 (231 aa).

A KH type-2 domain is found at 39–108 (IKNYIKKRYK…EISISVLEVK (70 aa)).

It belongs to the universal ribosomal protein uS3 family. As to quaternary structure, part of the 30S ribosomal subunit. Forms a tight complex with proteins S10 and S14.

Binds the lower part of the 30S subunit head. Binds mRNA in the 70S ribosome, positioning it for translation. In Aquifex pyrophilus, this protein is Small ribosomal subunit protein uS3.